Consider the following 88-residue polypeptide: MPKHSPPDTSPVARFEQSLQELEQLVQNMETGALSLEQSLGAYERGIALYRECHQALEQAQLRVRLLSDPMHPDDGEPFDPSLVSTSQ.

Residues 68–88 are disordered; the sequence is SDPMHPDDGEPFDPSLVSTSQ.

The protein belongs to the XseB family. As to quaternary structure, heterooligomer composed of large and small subunits.

It localises to the cytoplasm. It catalyses the reaction Exonucleolytic cleavage in either 5'- to 3'- or 3'- to 5'-direction to yield nucleoside 5'-phosphates.. Its function is as follows. Bidirectionally degrades single-stranded DNA into large acid-insoluble oligonucleotides, which are then degraded further into small acid-soluble oligonucleotides. In Xylella fastidiosa (strain 9a5c), this protein is Exodeoxyribonuclease 7 small subunit.